The chain runs to 833 residues: DNA ligase (833 aa).

NAD(+) is bound by residues 35 to 39, 84 to 85, and glutamate 115; these read DVEYD and SL. The N6-AMP-lysine intermediate role is filled by lysine 117. NAD(+) is bound by residues arginine 138, glutamate 175, lysine 292, and lysine 316. Zn(2+) is bound by residues cysteine 410, cysteine 413, cysteine 428, and cysteine 434. The 84-residue stretch at 750–833 folds into the BRCT domain; it reads VQAGPLDGQT…AFLSEHGQAV (84 aa).

It belongs to the NAD-dependent DNA ligase family. LigA subfamily. It depends on Mg(2+) as a cofactor. The cofactor is Mn(2+).

The enzyme catalyses NAD(+) + (deoxyribonucleotide)n-3'-hydroxyl + 5'-phospho-(deoxyribonucleotide)m = (deoxyribonucleotide)n+m + AMP + beta-nicotinamide D-nucleotide.. In terms of biological role, DNA ligase that catalyzes the formation of phosphodiester linkages between 5'-phosphoryl and 3'-hydroxyl groups in double-stranded DNA using NAD as a coenzyme and as the energy source for the reaction. It is essential for DNA replication and repair of damaged DNA. The polypeptide is DNA ligase (Xanthomonas campestris pv. campestris (strain 8004)).